The sequence spans 155 residues: 3-hydroxyacyl-[acyl-carrier-protein] dehydratase FabZ (155 aa).

Residue His58 is part of the active site.

It belongs to the thioester dehydratase family. FabZ subfamily.

It is found in the cytoplasm. It carries out the reaction a (3R)-hydroxyacyl-[ACP] = a (2E)-enoyl-[ACP] + H2O. In terms of biological role, involved in unsaturated fatty acids biosynthesis. Catalyzes the dehydration of short chain beta-hydroxyacyl-ACPs and long chain saturated and unsaturated beta-hydroxyacyl-ACPs. This chain is 3-hydroxyacyl-[acyl-carrier-protein] dehydratase FabZ, found in Alkalilimnicola ehrlichii (strain ATCC BAA-1101 / DSM 17681 / MLHE-1).